Here is a 95-residue protein sequence, read N- to C-terminus: Large ribosomal subunit protein bL27 (95 aa).

Positions 1-6 are excised as a propeptide; it reads MFLQLF.

It belongs to the bacterial ribosomal protein bL27 family. Post-translationally, the N-terminus is cleaved by ribosomal processing cysteine protease Prp.

The polypeptide is Large ribosomal subunit protein bL27 (Symbiobacterium thermophilum (strain DSM 24528 / JCM 14929 / IAM 14863 / T)).